Here is a 474-residue protein sequence, read N- to C-terminus: 6-phospho-beta-galactosidase (474 aa).

Q19, H116, N159, E160, and N297 together coordinate D-galactose 6-phosphate. E160 functions as the Proton donor in the catalytic mechanism. E375 acts as the Nucleophile in catalysis. The D-galactose 6-phosphate site is built by S433, W434, K440, and Y442.

This sequence belongs to the glycosyl hydrolase 1 family.

The catalysed reaction is a 6-phospho-beta-D-galactoside + H2O = D-galactose 6-phosphate + an alcohol. It functions in the pathway carbohydrate metabolism; lactose degradation; D-galactose 6-phosphate and beta-D-glucose from lactose 6-phosphate: step 1/1. This Lacticaseibacillus rhamnosus (Lactobacillus rhamnosus) protein is 6-phospho-beta-galactosidase.